Here is a 474-residue protein sequence, read N- to C-terminus: Gamma-aminobutyric acid receptor subunit beta-1 (474 aa).

Residues Met-1–Ala-25 form the signal peptide. Residues His-26–Tyr-245 lie on the Extracellular side of the membrane. N-linked (GlcNAc...) asparagine glycans are attached at residues Asn-33 and Asn-105. Tyr-122 is a binding site for histamine. A disulfide bridge connects residues Cys-161 and Cys-175. Asn-174 carries an N-linked (GlcNAc...) asparagine glycan. Residues Ser-181–Tyr-182 and Thr-227 contribute to the histamine site. Positions 182 and 227 each coordinate 4-aminobutanoate. The next 3 helical transmembrane spans lie at Phe-246–Ile-267, Ala-271–Leu-293, and Ala-305–Val-327. Over Asn-328–Lys-451 the chain is Cytoplasmic. Residues Trp-452 to Val-473 traverse the membrane as a helical segment.

Belongs to the ligand-gated ion channel (TC 1.A.9) family. Gamma-aminobutyric acid receptor (TC 1.A.9.5) subfamily. GABRB1 sub-subfamily. As to quaternary structure, heteropentamer, formed by a combination of alpha (GABRA1-6), beta (GABRB1-3), gamma (GABRG1-3), delta (GABRD), epsilon (GABRE), rho (GABRR1-3), pi (GABRP) and theta (GABRQ) chains, each subunit exhibiting distinct physiological and pharmacological properties. Binds UBQLN1.

It localises to the postsynaptic cell membrane. Its subcellular location is the cell membrane. The enzyme catalyses chloride(in) = chloride(out). Potentiated by histamine. Functionally, beta subunit of the heteropentameric ligand-gated chloride channel gated by gamma-aminobutyric acid (GABA), a major inhibitory neurotransmitter in the brain. GABA-gated chloride channels, also named GABA(A) receptors (GABAAR), consist of five subunits arranged around a central pore and contain GABA active binding site(s) located at the alpha and beta subunit interface(s). When activated by GABA, GABAARs selectively allow the flow of chloride anions across the cell membrane down their electrochemical gradient. Chloride influx into the postsynaptic neuron following GABAAR opening decreases the neuron ability to generate a new action potential, thereby reducing nerve transmission. Beta-containing GABAARs can simultaneously bind GABA and histamine where histamine binds at the interface of two neighboring beta subunits, which may be involved in the regulation of sleep and wakefulness. The polypeptide is Gamma-aminobutyric acid receptor subunit beta-1 (Mus musculus (Mouse)).